The sequence spans 74 residues: Omega-filistatoxin-Kh1a (74 aa).

Post-translationally, contains 6 disulfide bonds. Expressed by the venom gland.

It localises to the secreted. Its function is as follows. Potently blocks vertebrate calcium channels Cav1 and Cav2. Is the most active on Cav2.2/CACNA1B (from HEK) (IC(50)=2.3 nM), followed by Cav2.1/CACNA1A (IC(50)=4.3 nM), Cav2.2/CACNA1B (from oocyte) (IC(50)=14.4 nM), Cav1.2/CACNA1C (IC(50)=26.8 nM), and Cav2.3/CACNA1E (IC(50)=96.4 nM). This is Omega-filistatoxin-Kh1a from Kukulcania hibernalis (Southern house spider).